The chain runs to 885 residues: Leucine--tRNA ligase (885 aa).

Residues 53–63 (PYPSGKLHMGH) carry the 'HIGH' region motif. The short motif at 631 to 635 (KMSKS) is the 'KMSKS' region element. Lys-634 is a binding site for ATP.

This sequence belongs to the class-I aminoacyl-tRNA synthetase family.

The protein localises to the cytoplasm. It carries out the reaction tRNA(Leu) + L-leucine + ATP = L-leucyl-tRNA(Leu) + AMP + diphosphate. In Psychrobacter sp. (strain PRwf-1), this protein is Leucine--tRNA ligase.